Consider the following 270-residue polypeptide: Methionine-rich protein (270 aa).

The first 18 residues, 1 to 18 (MLSLWAIGLLGLLNQVEA), serve as a signal peptide directing secretion. The segment covering 31–52 (QRSAQFSSSGWGTSPAAQNPWS) has biased composition (polar residues). Positions 31 to 95 (QRSAQFSSSG…MPGSMPGAMP (65 aa)) are disordered. Positions 56–95 (PMPNTNMPNMNTGSLPGSMPGAMPGSMPGAMPGSMPGAMP) are enriched in low complexity.

As to expression, component of the acid-soluble organic matrix of calcified layers of the shell (at protein level).

It localises to the secreted. This chain is Methionine-rich protein, found in Lottia gigantea (Giant owl limpet).